Consider the following 198-residue polypeptide: NAD(P)H dehydrogenase (quinone) (198 aa).

A Flavodoxin-like domain is found at V4–V189. Residues S10–V15 and T78–F80 each bind FMN. Y12 is a binding site for NAD(+). Substrate is bound at residue W98. Residues S113–G118 and H133 contribute to the FMN site.

It belongs to the WrbA family. Requires FMN as cofactor.

The catalysed reaction is a quinone + NADH + H(+) = a quinol + NAD(+). It carries out the reaction a quinone + NADPH + H(+) = a quinol + NADP(+). This is NAD(P)H dehydrogenase (quinone) from Halorhodospira halophila (strain DSM 244 / SL1) (Ectothiorhodospira halophila (strain DSM 244 / SL1)).